The following is a 251-amino-acid chain: Hydroxyacylglutathione hydrolase (251 aa).

Residues histidine 54, histidine 56, aspartate 58, histidine 59, histidine 113, aspartate 140, and histidine 178 each coordinate Zn(2+).

It belongs to the metallo-beta-lactamase superfamily. Glyoxalase II family. In terms of assembly, monomer. Requires Zn(2+) as cofactor.

The catalysed reaction is an S-(2-hydroxyacyl)glutathione + H2O = a 2-hydroxy carboxylate + glutathione + H(+). It participates in secondary metabolite metabolism; methylglyoxal degradation; (R)-lactate from methylglyoxal: step 2/2. Functionally, thiolesterase that catalyzes the hydrolysis of S-D-lactoyl-glutathione to form glutathione and D-lactic acid. The sequence is that of Hydroxyacylglutathione hydrolase from Synechococcus sp. (strain CC9902).